The sequence spans 275 residues: Large ribosomal subunit protein uL2 (275 aa).

Over residues 28–38 (RPYEPLVETKS) the composition is skewed to basic and acidic residues. Disordered stretches follow at residues 28–53 (RPYE…TTRH) and 222–275 (GVAM…RSAK). Over residues 254–275 (KGHKTRKNKRTDKMIVRRRSAK) the composition is skewed to basic residues.

Belongs to the universal ribosomal protein uL2 family. Part of the 50S ribosomal subunit. Forms a bridge to the 30S subunit in the 70S ribosome.

Functionally, one of the primary rRNA binding proteins. Required for association of the 30S and 50S subunits to form the 70S ribosome, for tRNA binding and peptide bond formation. It has been suggested to have peptidyltransferase activity; this is somewhat controversial. Makes several contacts with the 16S rRNA in the 70S ribosome. This chain is Large ribosomal subunit protein uL2, found in Marinobacter nauticus (strain ATCC 700491 / DSM 11845 / VT8) (Marinobacter aquaeolei).